A 492-amino-acid polypeptide reads, in one-letter code: 1-aminocyclopropane-1-carboxylate synthase 1 (492 aa).

Lys-277 is modified (N6-(pyridoxal phosphate)lysine).

Belongs to the class-I pyridoxal-phosphate-dependent aminotransferase family. As to quaternary structure, homodimer. Pyridoxal 5'-phosphate serves as cofactor.

It catalyses the reaction S-adenosyl-L-methionine = 1-aminocyclopropane-1-carboxylate + S-methyl-5'-thioadenosine + H(+). It functions in the pathway alkene biosynthesis; ethylene biosynthesis via S-adenosyl-L-methionine; ethylene from S-adenosyl-L-methionine: step 1/2. In terms of biological role, catalyzes the formation of 1-aminocyclopropane-1-carboxylate, a direct precursor of ethylene in higher plants. This chain is 1-aminocyclopropane-1-carboxylate synthase 1 (ACS1), found in Prunus mume (Japanese apricot).